A 194-amino-acid chain; its full sequence is Peptidyl-tRNA hydrolase (194 aa).

TRNA is bound at residue Tyr16. Catalysis depends on His21, which acts as the Proton acceptor. TRNA is bound by residues Phe67, Asn69, and Asn115.

The protein belongs to the PTH family. In terms of assembly, monomer.

The protein localises to the cytoplasm. The catalysed reaction is an N-acyl-L-alpha-aminoacyl-tRNA + H2O = an N-acyl-L-amino acid + a tRNA + H(+). Its function is as follows. Hydrolyzes ribosome-free peptidyl-tRNAs (with 1 or more amino acids incorporated), which drop off the ribosome during protein synthesis, or as a result of ribosome stalling. Catalyzes the release of premature peptidyl moieties from peptidyl-tRNA molecules trapped in stalled 50S ribosomal subunits, and thus maintains levels of free tRNAs and 50S ribosomes. The protein is Peptidyl-tRNA hydrolase of Escherichia fergusonii (strain ATCC 35469 / DSM 13698 / CCUG 18766 / IAM 14443 / JCM 21226 / LMG 7866 / NBRC 102419 / NCTC 12128 / CDC 0568-73).